Here is a 307-residue protein sequence, read N- to C-terminus: Serine/threonine-protein phosphatase 4 catalytic subunit (307 aa).

Mn(2+) contacts are provided by aspartate 54, histidine 56, aspartate 82, and asparagine 114. Histidine 115 functions as the Proton donor in the catalytic mechanism. Residues histidine 164 and histidine 238 each coordinate Mn(2+). The residue at position 307 (leucine 307) is a Leucine methyl ester.

Belongs to the PPP phosphatase family. PP-4 (PP-X) subfamily. Serine/threonine-protein phosphatase 4 (PP4) occurs in different assemblies of the catalytic and one or more regulatory subunits. Probably part of a PP4 PPP4C-PPP4R2-PPP4R3 complex containing Pp4-19C, PPP4R2r and flfl. Interacts with Ptpa; thereby mediating basal localization of the Miranda (Mira) complex; probably by dephosphorylation of Mira. Mn(2+) is required as a cofactor. Post-translationally, reversibly methyl esterified on Leu-307 by leucine carboxyl methyltransferase 1 (LCMT1) and protein phosphatase methylesterase 1 (PPME1). Carboxyl methylation influences the affinity of the catalytic subunit for the different regulatory subunits, thereby modulating the PP2A holoenzyme's substrate specificity, enzyme activity and cellular localization.

It is found in the cytoplasm. Its subcellular location is the nucleus. The protein resides in the cytoskeleton. It localises to the microtubule organizing center. The protein localises to the centrosome. The enzyme catalyses O-phospho-L-seryl-[protein] + H2O = L-seryl-[protein] + phosphate. The catalysed reaction is O-phospho-L-threonyl-[protein] + H2O = L-threonyl-[protein] + phosphate. Protein phosphatase that regulates many processes such as microtubule organization at centrosomes. The probable PP4 complex Pp4-19C-PPP4R2r-flfl (PPP4C-PPP4R2-PPP4R3) is required to prevent caspase-induced cell death (in vitro). In Drosophila melanogaster (Fruit fly), this protein is Serine/threonine-protein phosphatase 4 catalytic subunit (Pp4-19C).